A 700-amino-acid chain; its full sequence is Polyribonucleotide nucleotidyltransferase (700 aa).

The Mg(2+) site is built by D485 and D491. A KH domain is found at 552–611 (PRITVIKINPEKIRDVIGKGGAVIRALTEETGTTIELEDDGTVKIASSNGEATKEAIRRI). Residues 621–689 (GRIYNGKVIR…RQGRVRLSIK (69 aa)) form the S1 motif domain.

This sequence belongs to the polyribonucleotide nucleotidyltransferase family. In terms of assembly, component of the RNA degradosome, which is a multiprotein complex involved in RNA processing and mRNA degradation. Requires Mg(2+) as cofactor.

Its subcellular location is the cytoplasm. It catalyses the reaction RNA(n+1) + phosphate = RNA(n) + a ribonucleoside 5'-diphosphate. In terms of biological role, involved in mRNA degradation. Catalyzes the phosphorolysis of single-stranded polyribonucleotides processively in the 3'- to 5'-direction. The sequence is that of Polyribonucleotide nucleotidyltransferase from Shewanella baltica (strain OS185).